The following is a 346-amino-acid chain: uncharacterized protein (346 aa).

Zn(2+) is bound at residue histidine 65. Aspartate 67 is a catalytic residue. Aspartate 89 contacts Zn(2+). The active-site Proton acceptor is glutamate 115. Glutamate 116, glutamate 145, and histidine 319 together coordinate Zn(2+).

It belongs to the peptidase M20A family. Zn(2+) is required as a cofactor. The cofactor is Co(2+).

This is an uncharacterized protein from Methanocaldococcus jannaschii (strain ATCC 43067 / DSM 2661 / JAL-1 / JCM 10045 / NBRC 100440) (Methanococcus jannaschii).